The primary structure comprises 426 residues: Serine--tRNA ligase (426 aa).

Thr233 to Glu235 serves as a coordination point for L-serine. Arg264–Glu266 contacts ATP. Glu287 is an L-serine binding site. Glu351–Ser354 contributes to the ATP binding site. Residue Ser387 coordinates L-serine.

The protein belongs to the class-II aminoacyl-tRNA synthetase family. Type-1 seryl-tRNA synthetase subfamily. As to quaternary structure, homodimer. The tRNA molecule binds across the dimer.

Its subcellular location is the cytoplasm. The catalysed reaction is tRNA(Ser) + L-serine + ATP = L-seryl-tRNA(Ser) + AMP + diphosphate + H(+). It catalyses the reaction tRNA(Sec) + L-serine + ATP = L-seryl-tRNA(Sec) + AMP + diphosphate + H(+). The protein operates within aminoacyl-tRNA biosynthesis; selenocysteinyl-tRNA(Sec) biosynthesis; L-seryl-tRNA(Sec) from L-serine and tRNA(Sec): step 1/1. Functionally, catalyzes the attachment of serine to tRNA(Ser). Is also able to aminoacylate tRNA(Sec) with serine, to form the misacylated tRNA L-seryl-tRNA(Sec), which will be further converted into selenocysteinyl-tRNA(Sec). This is Serine--tRNA ligase from Stenotrophomonas maltophilia (strain R551-3).